The following is a 193-amino-acid chain: UPF0301 protein SAV_5129 (193 aa).

It belongs to the UPF0301 (AlgH) family.

The protein is UPF0301 protein SAV_5129 of Streptomyces avermitilis (strain ATCC 31267 / DSM 46492 / JCM 5070 / NBRC 14893 / NCIMB 12804 / NRRL 8165 / MA-4680).